The following is a 193-amino-acid chain: Signal peptidase I T (193 aa).

Residues 1-25 are Cytoplasmic-facing; it reads MTEEKNTNTEKTAKKKTNTYLEWGK. Residues 26–42 form a helical membrane-spanning segment; that stretch reads AIVIAVLLALLIRHFLF. Residues 43-193 are Extracellular-facing; that stretch reads EPYLVEGSSM…FPFNEMRQTK (151 aa). Residues Ser51 and Lys93 contribute to the active site.

Belongs to the peptidase S26 family.

The protein resides in the cell membrane. It catalyses the reaction Cleavage of hydrophobic, N-terminal signal or leader sequences from secreted and periplasmic proteins.. The protein is Signal peptidase I T (sipT) of Bacillus subtilis (strain 168).